A 591-amino-acid polypeptide reads, in one-letter code: Polyphenol oxidase D, chloroplastic (591 aa).

A chloroplast-targeting transit peptide spans 1 to 83; that stretch reads MASLCSNSST…ANAIPLAASA (83 aa). Cystine bridges form between Cys94-Cys110 and Cys109-Cys177. The Cu cation site is built by His176, His194, His203, His324, His328, and His366. The 2'-(S-cysteinyl)-histidine (Cys-His) cross-link spans 180 to 194; it reads CNGAYRIGGKELQVH.

It belongs to the tyrosinase family. Cu(2+) is required as a cofactor.

It is found in the plastid. The protein localises to the chloroplast thylakoid lumen. It carries out the reaction 2 catechol + O2 = 2 1,2-benzoquinone + 2 H2O. Functionally, catalyzes the oxidation of mono- and o-diphenols to o-diquinones. The protein is Polyphenol oxidase D, chloroplastic of Solanum lycopersicum (Tomato).